Reading from the N-terminus, the 814-residue chain is Protein fam-161 (814 aa).

A compositionally biased stretch (polar residues) spans 71–87 (ITQHRSSYKVTKSSSCH). 4 disordered regions span residues 71-130 (ITQH…SWSQ), 150-255 (RHQV…ATSA), 569-610 (SRSK…THAT), and 714-814 (MKSA…SSEA). A compositionally biased stretch (basic and acidic residues) spans 99–111 (MPRHLDLKPRSSE). Low complexity predominate over residues 174–193 (STAPSQVSVTSSVQSVAALS). Composition is skewed to polar residues over residues 194-207 (GQNPRQQVHATPSH) and 216-235 (RTHQNSRQQVPSATSSTLQN). Basic residues predominate over residues 236-249 (PRHRTSSASRHHST). Polar residues-rich tracts occupy residues 570 to 583 (RSKSATSRHGNCQE) and 594 to 610 (ENLPKTSKNRVPSTHAT). Residues 606-689 (STHATQLREE…LAEMKQRVLN (84 aa)) adopt a coiled-coil conformation. Residues 714–727 (MKSAKGRGIERVQS) are compositionally biased toward basic and acidic residues. A compositionally biased stretch (polar residues) spans 728 to 745 (QEKQQSIGRRSSEVSGSG). Basic and acidic residues predominate over residues 751 to 765 (KGYEESFESEDKSEK). Composition is skewed to low complexity over residues 766 to 779 (SGSSTPSESGSGSE) and 795 to 814 (SKSTSSKSSSSRSTSSSSEA).

The protein belongs to the FAM161 family. As to expression, expressed in amphid and phasmid ciliated neurons.

The protein localises to the cell projection. The protein resides in the cilium. Its subcellular location is the cytoplasm. It localises to the cytoskeleton. It is found in the cilium axoneme. This chain is Protein fam-161, found in Caenorhabditis elegans.